We begin with the raw amino-acid sequence, 256 residues long: Triosephosphate isomerase (256 aa).

Residue 10 to 12 participates in substrate binding; the sequence is NWK. The Electrophile role is filled by His96. Catalysis depends on Glu168, which acts as the Proton acceptor. Residues Gly174 and Ser213 each coordinate substrate.

This sequence belongs to the triosephosphate isomerase family. Homodimer.

It is found in the cytoplasm. It catalyses the reaction D-glyceraldehyde 3-phosphate = dihydroxyacetone phosphate. It functions in the pathway carbohydrate biosynthesis; gluconeogenesis. It participates in carbohydrate degradation; glycolysis; D-glyceraldehyde 3-phosphate from glycerone phosphate: step 1/1. Functionally, involved in the gluconeogenesis. Catalyzes stereospecifically the conversion of dihydroxyacetone phosphate (DHAP) to D-glyceraldehyde-3-phosphate (G3P). In Wigglesworthia glossinidia brevipalpis, this protein is Triosephosphate isomerase.